Consider the following 186-residue polypeptide: dCTP deaminase (186 aa).

107–112 (KSTYAR) is a binding site for dCTP. The Proton donor/acceptor role is filled by glutamate 133. Residues glutamine 152, tyrosine 166, and glutamine 176 each contribute to the dCTP site.

This sequence belongs to the dCTP deaminase family. Homotrimer.

It catalyses the reaction dCTP + H2O + H(+) = dUTP + NH4(+). The protein operates within pyrimidine metabolism; dUMP biosynthesis; dUMP from dCTP (dUTP route): step 1/2. Its function is as follows. Catalyzes the deamination of dCTP to dUTP. The protein is dCTP deaminase of Campylobacter fetus subsp. fetus (strain 82-40).